Here is a 259-residue protein sequence, read N- to C-terminus: Sphinganine C4-monooxygenase 2 (259 aa).

The next 3 membrane-spanning stretches (helical) occupy residues 10-30 (FLGT…YICL), 54-74 (AVVK…VILF), and 91-111 (ILLL…WQYF). Positions 98 to 234 (FIIAMLVIDT…FVMWDRILGT (137 aa)) constitute a Fatty acid hydroxylase domain. A Histidine box-1 motif is present at residues 113-117 (HRYMH). Positions 127–131 (HSQHH) match the Histidine box-2 motif. The Histidine box-3 motif lies at 206-212 (YHDVHHQ).

The protein belongs to the sterol desaturase family. The cofactor is Fe cation. In terms of tissue distribution, ubiquitous, with higher levels in flowers and roots.

Its subcellular location is the endoplasmic reticulum membrane. The catalysed reaction is a dihydroceramide + 2 Fe(II)-[cytochrome b5] + O2 + 2 H(+) = a phytoceramide + 2 Fe(III)-[cytochrome b5] + H2O. The protein operates within membrane lipid metabolism; sphingolipid biosynthesis. Its function is as follows. Involved in sphingolipid trihydroxy long-chain base (4-hydroxysphinganine) biosynthesis. Can use C18- and C20-sphinganine as substrates to produce C18- and C20-phytosphinganines (D-ribo-2-amino-1,3,4-trihydroxyoctadecane and -eicosane). This Arabidopsis thaliana (Mouse-ear cress) protein is Sphinganine C4-monooxygenase 2 (SBH2).